The following is a 331-amino-acid chain: Adenosine deaminase (331 aa).

2 residues coordinate Zn(2+): His12 and His14. Substrate contacts are provided by His14 and Asp16. His197 is a binding site for Zn(2+). Residue Glu200 is the Proton donor of the active site. Asp278 contacts Zn(2+).

Belongs to the metallo-dependent hydrolases superfamily. Adenosine and AMP deaminases family. Adenosine deaminase subfamily. Zn(2+) serves as cofactor.

The enzyme catalyses adenosine + H2O + H(+) = inosine + NH4(+). The catalysed reaction is 2'-deoxyadenosine + H2O + H(+) = 2'-deoxyinosine + NH4(+). In terms of biological role, catalyzes the hydrolytic deamination of adenosine and 2-deoxyadenosine. The polypeptide is Adenosine deaminase (Shewanella halifaxensis (strain HAW-EB4)).